The following is a 321-amino-acid chain: ATP-dependent 6-phosphofructokinase (321 aa).

ATP is bound at residue Gly-11. Residue 21–25 (RAVVR) participates in ADP binding. ATP-binding positions include 72–73 (RC) and 102–105 (GDGS). A Mg(2+)-binding site is contributed by Asp-103. 126–128 (TID) contributes to the substrate binding site. Asp-128 acts as the Proton acceptor in catalysis. ADP is bound at residue Arg-155. Substrate contacts are provided by residues Arg-163 and 170–172 (MGR). Residues 186–188 (GAE), Arg-212, and 214–216 (KLH) contribute to the ADP site. Residues Glu-223, Arg-245, and 251–254 (HIQR) contribute to the substrate site.

This sequence belongs to the phosphofructokinase type A (PFKA) family. ATP-dependent PFK group I subfamily. Prokaryotic clade 'B1' sub-subfamily. In terms of assembly, homotetramer. Mg(2+) serves as cofactor.

Its subcellular location is the cytoplasm. It catalyses the reaction beta-D-fructose 6-phosphate + ATP = beta-D-fructose 1,6-bisphosphate + ADP + H(+). Its pathway is carbohydrate degradation; glycolysis; D-glyceraldehyde 3-phosphate and glycerone phosphate from D-glucose: step 3/4. Allosterically activated by ADP and other diphosphonucleosides, and allosterically inhibited by phosphoenolpyruvate. Its function is as follows. Catalyzes the phosphorylation of D-fructose 6-phosphate to fructose 1,6-bisphosphate by ATP, the first committing step of glycolysis. The protein is ATP-dependent 6-phosphofructokinase of Caldanaerobacter subterraneus subsp. tengcongensis (strain DSM 15242 / JCM 11007 / NBRC 100824 / MB4) (Thermoanaerobacter tengcongensis).